The following is a 98-amino-acid chain: uncharacterized protein (98 aa).

The next 2 membrane-spanning stretches (helical) occupy residues 13-33 (LFSL…IAIF) and 65-85 (IMVI…IFIS).

Its subcellular location is the membrane. This is an uncharacterized protein from Saccharomyces cerevisiae (strain ATCC 204508 / S288c) (Baker's yeast).